Consider the following 775-residue polypeptide: tRNA(Met) cytidine acetyltransferase TmcA (775 aa).

Disordered regions lie at residues 1–33 (MPTT…GMDI) and 191–215 (TVEQ…PTDA). Residues 199–212 (DPPPSRPVPSPTPP) are compositionally biased toward pro residues. ATP is bound by residues Q230, 254 to 263 (GRGKSSAAGL), and R403. The N-acetyltransferase domain maps to 438–623 (VEYRQLSAAD…YSVVMLDPCS (186 aa)). Residues 549–551 (IAT), 556–562 (RSRGLGS), and E588 each bind acetyl-CoA.

Belongs to the RNA cytidine acetyltransferase family. TmcA subfamily.

Its subcellular location is the cytoplasm. The catalysed reaction is cytidine(34) in elongator tRNA(Met) + acetyl-CoA + ATP + H2O = N(4)-acetylcytidine(34) in elongator tRNA(Met) + ADP + phosphate + CoA + H(+). In terms of biological role, catalyzes the formation of N(4)-acetylcytidine (ac(4)C) at the wobble position of tRNA(Met), by using acetyl-CoA as an acetyl donor and ATP (or GTP). The protein is tRNA(Met) cytidine acetyltransferase TmcA of Haloarcula marismortui (strain ATCC 43049 / DSM 3752 / JCM 8966 / VKM B-1809) (Halobacterium marismortui).